The primary structure comprises 178 residues: Ribonuclease M5 (178 aa).

In terms of domain architecture, Toprim spans 4-100 (NEFIVVEGRD…KIGVEHADLI (97 aa)). Positions 10, 56, and 58 each coordinate Mg(2+).

The protein belongs to the ribonuclease M5 family. Mg(2+) serves as cofactor.

The protein resides in the cytoplasm. It carries out the reaction Endonucleolytic cleavage of RNA, removing 21 and 42 nucleotides, respectively, from the 5'- and 3'-termini of a 5S-rRNA precursor.. In terms of biological role, required for correct processing of both the 5' and 3' ends of 5S rRNA precursor. Cleaves both sides of a double-stranded region yielding mature 5S rRNA in one step. The sequence is that of Ribonuclease M5 from Staphylococcus aureus (strain NCTC 8325 / PS 47).